We begin with the raw amino-acid sequence, 159 residues long: Ribosomal RNA large subunit methyltransferase H (159 aa).

Residues L76, G108, and 127–132 contribute to the S-adenosyl-L-methionine site; that span reads FSKMTF.

This sequence belongs to the RNA methyltransferase RlmH family. Homodimer.

It is found in the cytoplasm. The catalysed reaction is pseudouridine(1915) in 23S rRNA + S-adenosyl-L-methionine = N(3)-methylpseudouridine(1915) in 23S rRNA + S-adenosyl-L-homocysteine + H(+). Specifically methylates the pseudouridine at position 1915 (m3Psi1915) in 23S rRNA. This Clostridium botulinum (strain 657 / Type Ba4) protein is Ribosomal RNA large subunit methyltransferase H.